Reading from the N-terminus, the 841-residue chain is Probable outer membrane usher protein EcpC (841 aa).

The signal sequence occupies residues 1-29 (MPLRRFSPGLKAQFAFGMVFLFVQPDASA).

It belongs to the EcpC/MatD family.

In terms of biological role, part of the ecpRABCDE operon, which encodes the E.coli common pilus (ECP). ECP is found in both commensal and pathogenic strains and plays a dual role in early-stage biofilm development and host cell recognition. This Escherichia coli O6:H1 (strain CFT073 / ATCC 700928 / UPEC) protein is Probable outer membrane usher protein EcpC (ecpC).